The chain runs to 343 residues: Phenylalanine--tRNA ligase alpha subunit (343 aa).

Glutamate 268 is a Mg(2+) binding site.

It belongs to the class-II aminoacyl-tRNA synthetase family. Phe-tRNA synthetase alpha subunit type 1 subfamily. Tetramer of two alpha and two beta subunits. Requires Mg(2+) as cofactor.

Its subcellular location is the cytoplasm. It catalyses the reaction tRNA(Phe) + L-phenylalanine + ATP = L-phenylalanyl-tRNA(Phe) + AMP + diphosphate + H(+). The protein is Phenylalanine--tRNA ligase alpha subunit of Cupriavidus taiwanensis (strain DSM 17343 / BCRC 17206 / CCUG 44338 / CIP 107171 / LMG 19424 / R1) (Ralstonia taiwanensis (strain LMG 19424)).